We begin with the raw amino-acid sequence, 36 residues long: Pancreatic polypeptide (36 aa).

Phenylalanine amide is present on F36.

It belongs to the NPY family.

The protein resides in the secreted. Functionally, hormone secreted by pancreatic cells that acts as a regulator of pancreatic and gastrointestinal functions. The sequence is that of Pancreatic polypeptide (ppy) from Aquarana catesbeiana (American bullfrog).